We begin with the raw amino-acid sequence, 400 residues long: Enoyl-[acyl-carrier-protein] reductase [NADH] (400 aa).

Residues 48–53 (GASSGY), 74–75 (FE), 111–112 (DA), and 139–140 (LA) each bind NAD(+). Y225 is a substrate binding site. Y235 serves as the catalytic Proton donor. NAD(+)-binding positions include K244 and 273 to 275 (VVT).

It belongs to the TER reductase family. As to quaternary structure, monomer.

It carries out the reaction a 2,3-saturated acyl-[ACP] + NAD(+) = a (2E)-enoyl-[ACP] + NADH + H(+). The protein operates within lipid metabolism; fatty acid biosynthesis. Involved in the final reduction of the elongation cycle of fatty acid synthesis (FAS II). Catalyzes the reduction of a carbon-carbon double bond in an enoyl moiety that is covalently linked to an acyl carrier protein (ACP). The polypeptide is Enoyl-[acyl-carrier-protein] reductase [NADH] (Marinomonas sp. (strain MWYL1)).